The sequence spans 276 residues: Putative metal-binding protein TC_0696 (276 aa).

Residues 1 to 18 (MRLLILLLFSFGIIYSHG) form the signal peptide. A divalent metal cation-binding residues include H59, H121, H185, and D256.

It belongs to the bacterial solute-binding protein 9 family.

It localises to the periplasm. In terms of biological role, part of an ATP-binding cassette (ABC) transport system involved in metal import. Binds a metal with high affinity and specificity and delivers it to the membrane permease for translocation into the cytoplasm. In Chlamydia muridarum (strain MoPn / Nigg), this protein is Putative metal-binding protein TC_0696.